The following is a 429-amino-acid chain: Glutamate-1-semialdehyde 2,1-aminomutase 1 (429 aa).

N6-(pyridoxal phosphate)lysine is present on K268.

This sequence belongs to the class-III pyridoxal-phosphate-dependent aminotransferase family. HemL subfamily. In terms of assembly, homodimer. Pyridoxal 5'-phosphate serves as cofactor.

Its subcellular location is the cytoplasm. It catalyses the reaction (S)-4-amino-5-oxopentanoate = 5-aminolevulinate. It participates in porphyrin-containing compound metabolism; protoporphyrin-IX biosynthesis; 5-aminolevulinate from L-glutamyl-tRNA(Glu): step 2/2. This Staphylococcus saprophyticus subsp. saprophyticus (strain ATCC 15305 / DSM 20229 / NCIMB 8711 / NCTC 7292 / S-41) protein is Glutamate-1-semialdehyde 2,1-aminomutase 1.